The sequence spans 89 residues: Large ribosomal subunit protein bL27 (89 aa).

The disordered stretch occupies residues 1-26 (MAHKKGVGSSRNGRDSESKRLGVKEG). The span at 12 to 26 (NGRDSESKRLGVKEG) shows a compositional bias: basic and acidic residues.

Belongs to the bacterial ribosomal protein bL27 family.

In Desulforamulus reducens (strain ATCC BAA-1160 / DSM 100696 / MI-1) (Desulfotomaculum reducens), this protein is Large ribosomal subunit protein bL27.